The following is a 249-amino-acid chain: MAGHSHWAKVKHQKGLTDIRKGKLFSKLSREISIAARLGGGDPTFNSRLRRAIANAKDEGVPLENITRAIQKGTGEIAGSHYEDVLYEGYGPGGVAVLIEAATDNRNRTTAEIRNLFSKYGGNLGAAGSVSWIFQKKGRIVLDGDQNDFDRVFEVALEAGAEDVEQKGSEIEVICLPEKLDELQKHLDTAGLTIKSSQITYLPKNSISVTDKETFKSLYRLLDILEDHDDVQNVYANFDAPQELLEQCE.

The protein belongs to the TACO1 family.

The protein localises to the cytoplasm. The chain is Probable transcriptional regulatory protein Minf_0651 from Methylacidiphilum infernorum (isolate V4) (Methylokorus infernorum (strain V4)).